Consider the following 171-residue polypeptide: MRAIAILLAVVATIFASLHGVSAIIAVNAEPASSIDSASTHLNFQRRLRQTGDASDEERGNTWFSAKIAKLIEQRKINAMMTKLTKGKSKDEVSKVKQAFQDNVLDELKALVEKGFAPDSFKTALEKLRPGNKGGEDLVAYFTAYWDTFHKAKKLSGVRKQKKRVPHAADV.

The N-terminal stretch at 1–23 is a signal peptide; that stretch reads MRAIAILLAVVATIFASLHGVSA. Positions 46 to 59 match the RxLR-dEER motif; sequence RRLRQTGDASDEER.

The protein belongs to the RxLR effector family.

It is found in the secreted. It localises to the host cell. In terms of biological role, effector that is involved in host plant infection. Contributes to virulence during the early infection stage, by inhibiting plant defense responses induced by both PAMP-triggered immunity (PTI) and effector-triggered immunity (ETI). This Phytophthora infestans (strain T30-4) (Potato late blight agent) protein is RxLR effector protein CRE7.